The following is a 158-amino-acid chain: Acireductone dioxygenase (158 aa).

Positions 81, 83, 87, and 126 each coordinate Fe(2+). Ni(2+) contacts are provided by H81, H83, E87, and H126.

This sequence belongs to the acireductone dioxygenase (ARD) family. It depends on Fe(2+) as a cofactor. Requires Ni(2+) as cofactor.

It is found in the cytoplasm. The protein localises to the nucleus. The enzyme catalyses 1,2-dihydroxy-5-(methylsulfanyl)pent-1-en-3-one + O2 = 4-methylsulfanyl-2-oxobutanoate + formate + 2 H(+). The catalysed reaction is 1,2-dihydroxy-5-(methylsulfanyl)pent-1-en-3-one + O2 = 3-(methylsulfanyl)propanoate + CO + formate + 2 H(+). It functions in the pathway amino-acid biosynthesis; L-methionine biosynthesis via salvage pathway; L-methionine from S-methyl-5-thio-alpha-D-ribose 1-phosphate: step 5/6. In terms of biological role, catalyzes 2 different reactions between oxygen and the acireductone 1,2-dihydroxy-3-keto-5-methylthiopentene (DHK-MTPene) depending upon the metal bound in the active site. Fe-containing acireductone dioxygenase (Fe-ARD) produces formate and 2-keto-4-methylthiobutyrate (KMTB), the alpha-ketoacid precursor of methionine in the methionine recycle pathway. Ni-containing acireductone dioxygenase (Ni-ARD) produces methylthiopropionate, carbon monoxide and formate, and does not lie on the methionine recycle pathway. This chain is Acireductone dioxygenase, found in Metarhizium robertsii (strain ARSEF 23 / ATCC MYA-3075) (Metarhizium anisopliae (strain ARSEF 23)).